The sequence spans 302 residues: Methionyl-tRNA formyltransferase (302 aa).

A (6S)-5,6,7,8-tetrahydrofolate-binding site is contributed by 103–106 (SLLP).

The protein belongs to the Fmt family.

The catalysed reaction is L-methionyl-tRNA(fMet) + (6R)-10-formyltetrahydrofolate = N-formyl-L-methionyl-tRNA(fMet) + (6S)-5,6,7,8-tetrahydrofolate + H(+). Its function is as follows. Attaches a formyl group to the free amino group of methionyl-tRNA(fMet). The formyl group appears to play a dual role in the initiator identity of N-formylmethionyl-tRNA by promoting its recognition by IF2 and preventing the misappropriation of this tRNA by the elongation apparatus. The sequence is that of Methionyl-tRNA formyltransferase from Pseudothermotoga lettingae (strain ATCC BAA-301 / DSM 14385 / NBRC 107922 / TMO) (Thermotoga lettingae).